The sequence spans 121 residues: Fluoride-specific ion channel FluC 1 (121 aa).

A run of 4 helical transmembrane segments spans residues 3–23, 35–55, 64–84, and 92–112; these read YVYI…ISFL, IANL…IAFF, AITT…LELI, and FITL…LCYV. Na(+)-binding residues include Gly71 and Thr74.

It belongs to the fluoride channel Fluc/FEX (TC 1.A.43) family.

Its subcellular location is the cell membrane. It catalyses the reaction fluoride(in) = fluoride(out). Na(+) is not transported, but it plays an essential structural role and its presence is essential for fluoride channel function. Its function is as follows. Fluoride-specific ion channel. Important for reducing fluoride concentration in the cell, thus reducing its toxicity. The chain is Fluoride-specific ion channel FluC 1 from Staphylococcus aureus (strain NCTC 8325 / PS 47).